The sequence spans 605 residues: DNA mismatch repair protein MutL (605 aa).

Belongs to the DNA mismatch repair MutL/HexB family.

Its function is as follows. This protein is involved in the repair of mismatches in DNA. It is required for dam-dependent methyl-directed DNA mismatch repair. May act as a 'molecular matchmaker', a protein that promotes the formation of a stable complex between two or more DNA-binding proteins in an ATP-dependent manner without itself being part of a final effector complex. The protein is DNA mismatch repair protein MutL of Exiguobacterium sp. (strain ATCC BAA-1283 / AT1b).